The chain runs to 226 residues: TPD1 protein homolog 1A (226 aa).

Positions 1–35 (MRVSSASSTPPPPAFAAAAWAVVLLAMLRSDVALA) are cleaved as a signal peptide.

As to quaternary structure, interacts with MSP1. In terms of tissue distribution, expressed in roots, and anthers and ovules during meiosis.

Its function is as follows. Involved in cell specification during anther development. Required for the differentiation of primary parietal cells into secondary parietal cells in anthers. May serve as an extracellular ligand for the MSP1 receptor kinase to limit sporocyte number in ovules. The chain is TPD1 protein homolog 1A from Oryza sativa subsp. japonica (Rice).